A 223-amino-acid polypeptide reads, in one-letter code: ATP phosphoribosyltransferase (223 aa).

It belongs to the ATP phosphoribosyltransferase family. Short subfamily. Heteromultimer composed of HisG and HisZ subunits.

The protein resides in the cytoplasm. It carries out the reaction 1-(5-phospho-beta-D-ribosyl)-ATP + diphosphate = 5-phospho-alpha-D-ribose 1-diphosphate + ATP. It participates in amino-acid biosynthesis; L-histidine biosynthesis; L-histidine from 5-phospho-alpha-D-ribose 1-diphosphate: step 1/9. Its function is as follows. Catalyzes the condensation of ATP and 5-phosphoribose 1-diphosphate to form N'-(5'-phosphoribosyl)-ATP (PR-ATP). Has a crucial role in the pathway because the rate of histidine biosynthesis seems to be controlled primarily by regulation of HisG enzymatic activity. In Sphingopyxis alaskensis (strain DSM 13593 / LMG 18877 / RB2256) (Sphingomonas alaskensis), this protein is ATP phosphoribosyltransferase.